We begin with the raw amino-acid sequence, 234 residues long: UPF0758 protein Smlt0399 (234 aa).

Residues 103–225 (VGNNPAAVGR…PVSFAERGLL (123 aa)) enclose the MPN domain. Zn(2+)-binding residues include histidine 174, histidine 176, and aspartate 187. The short motif at 174–187 (HNHPSGDPEPSSAD) is the JAMM motif element.

The protein belongs to the UPF0758 family.

The chain is UPF0758 protein Smlt0399 from Stenotrophomonas maltophilia (strain K279a).